The chain runs to 1073 residues: uncharacterized protein (1073 aa).

Residues 1-36 (MAEIIHHSNVFTWAFHVSEYDGAPLLLLGSFSSVAS) form the signal peptide. N-linked (GlcNAc...) asparagine glycosylation is present at asparagine 132. 392-399 (ATAGIGKS) serves as a coordination point for ATP. N-linked (GlcNAc...) asparagine glycosylation is found at asparagine 544, asparagine 632, asparagine 703, asparagine 732, and asparagine 953.

This is an uncharacterized protein from Schizosaccharomyces pombe (strain 972 / ATCC 24843) (Fission yeast).